The sequence spans 97 residues: MARKYEIMYIIRPNIEEDEKKAVVERFDGILTENGAEIIESKEWGKRRLAYEINDYRDGFYHIVKLNADKADSINEFDRLAKISDDIVRHMVIKEEA.

This sequence belongs to the bacterial ribosomal protein bS6 family.

In terms of biological role, binds together with bS18 to 16S ribosomal RNA. The chain is Small ribosomal subunit protein bS6 from Listeria innocua serovar 6a (strain ATCC BAA-680 / CLIP 11262).